A 103-amino-acid chain; its full sequence is Small ribosomal subunit protein uS10 (103 aa).

It belongs to the universal ribosomal protein uS10 family. As to quaternary structure, part of the 30S ribosomal subunit.

Involved in the binding of tRNA to the ribosomes. This is Small ribosomal subunit protein uS10 from Pectobacterium atrosepticum (strain SCRI 1043 / ATCC BAA-672) (Erwinia carotovora subsp. atroseptica).